The primary structure comprises 347 residues: Transcription elongation factor A protein 3 (347 aa).

A TFIIS N-terminal domain is found at E5 to P82. Basic and acidic residues predominate over residues R83 to G100. Residues R83–T168 form a disordered region. The residue at position 113 (S113) is a Phosphoserine. Residues G119–D131 show a composition bias toward basic and acidic residues. 2 stretches are compositionally biased toward low complexity: residues S132–R142 and T157–T168. Position 139 is a phosphoserine (S139). Positions V186–T302 constitute a TFIIS central domain. The segment at D305 to K345 adopts a TFIIS-type zinc-finger fold. Residues C309, C312, C337, and C340 each contribute to the Zn(2+) site.

This sequence belongs to the TFS-II family. As to expression, liver, kidney and heart.

It is found in the nucleus. Its function is as follows. Necessary for efficient RNA polymerase II transcription elongation past template-encoded arresting sites. The arresting sites in DNA have the property of trapping a certain fraction of elongating RNA polymerases that pass through, resulting in locked ternary complexes. Cleavage of the nascent transcript by S-II allows the resumption of elongation from the new 3'-terminus. This chain is Transcription elongation factor A protein 3 (Tcea3), found in Mus musculus (Mouse).